The following is an 851-amino-acid chain: ATP-dependent DNA helicase DDX31 (851 aa).

The tract at residues 1–196 (MAPDLASQRH…STSDRNQEER (196 aa)) is disordered. The Q motif signature appears at 230 to 259 (AAFHELGLHPHLISTINTVLKMSSMTSVQK). The Helicase ATP-binding domain occupies 262–443 (IPVLLEGRDA…DISLHDPVSI (182 aa)). 275–282 (SQTGSGKT) is a binding site for ATP. The DEAD box motif lies at 388 to 391 (DEAD). A Helicase C-terminal domain is found at 480–659 (SLKQHVTVVP…VSEIKMEDIL (180 aa)). Disordered stretches follow at residues 762 to 784 (KKRK…HSLA) and 804 to 851 (KQNA…SQKV). Position 828 is an omega-N-methylarginine (Arg-828). Over residues 841-851 (VQRDSKTSQKV) the composition is skewed to basic and acidic residues.

The protein belongs to the DEAD box helicase family. DDX31/DBP7 subfamily. Interacts with NPM1; this interaction prevents interaction between NPM1 and HDM2. As to expression, weakly or undetectably expressed in normal organs. Up-regulated in renal cell carcinoma.

The protein resides in the nucleus. It localises to the nucleolus. The enzyme catalyses ATP + H2O = ADP + phosphate + H(+). In terms of biological role, may have DNA helicase activity and RNA helicase activity. Probably have ssDNA and RNA dependent ATPase activity. Plays a role in ribosome biogenesis and TP53/p53 regulation through its interaction with NPM1. The chain is ATP-dependent DNA helicase DDX31 from Homo sapiens (Human).